The chain runs to 80 residues: MRALRVSQALVRSFSSTARNRFENRVAEKQKLFQEDNGLPVHLKGGATDNILYRVTMTLCLGGTLYSLYCLGWASFPHKK.

The N-terminal 21 residues, 1-21 (MRALRVSQALVRSFSSTARNR), are a transit peptide targeting the mitochondrion. The Mitochondrial matrix portion of the chain corresponds to 22-46 (FENRVAEKQKLFQEDNGLPVHLKGG). The chain crosses the membrane as a helical span at residues 47–75 (ATDNILYRVTMTLCLGGTLYSLYCLGWAS). Residues 76–80 (FPHKK) lie on the Mitochondrial intermembrane side of the membrane.

The protein belongs to the cytochrome c oxidase VIIa family. Component of the complex IV (CIV, cytochrome c oxidase), a multisubunit enzyme composed of 14 subunits. The complex is composed of a catalytic core of 3 subunits MT-CO1, MT-CO2 and MT-CO3, encoded in the mitochondrial DNA, and 11 supernumerary subunits COX4I1 (or COX4I2), COX5A, COX5B, COX6A2 (or COX6A1), COX6B1 (or COX6B2), COX6C, COX7A1 (or COX7A2), COX7B, COX7C, COX8B and NDUFA4, which are encoded in the nuclear genome. The complex exists as a monomer or a dimer and forms supercomplexes (SCs) in the inner mitochondrial membrane with NADH-ubiquinone oxidoreductase (complex I, CI) and ubiquinol-cytochrome c oxidoreductase (cytochrome b-c1 complex, complex III, CIII), resulting in different assemblies (supercomplex SCI(1)III(2)IV(1) and megacomplex MCI(2)III(2)IV(2)).

It localises to the mitochondrion inner membrane. It functions in the pathway energy metabolism; oxidative phosphorylation. Functionally, component of the mitochondrial respiratory complex IV (CIV, also named cytochrome c oxidase complex), the last enzyme in the mitochondrial electron transport chain which drives oxidative phosphorylation. The CIV complex is the component of the respiratory chain that catalyzes the reduction of oxygen to water. Acts as an assembly factor that specifically drives the homodimerization of CIV complexes, mediating the formation of mitochondrial respiratory supercomplexes (respirasomes) containing two CIV: supercomplxes with two molecules of CIV show improved activity. Despite being highly expressed in brown adipose tissue, not required for thermogenesis. In Bos taurus (Bovine), this protein is Cytochrome c oxidase subunit 7A1, mitochondrial (COX7A1).